The chain runs to 103 residues: Large ribosomal subunit protein bL21 (103 aa).

The protein belongs to the bacterial ribosomal protein bL21 family. Part of the 50S ribosomal subunit. Contacts protein L20.

Functionally, this protein binds to 23S rRNA in the presence of protein L20. This Shewanella piezotolerans (strain WP3 / JCM 13877) protein is Large ribosomal subunit protein bL21.